Reading from the N-terminus, the 277-residue chain is Alpha-ketoglutarate-dependent dioxygenase tstK (277 aa).

Belongs to the asaB hydroxylase/desaturase family.

The enzyme catalyses 2-[(1R,8S,14R,15R)-11-hydroxy-14,15-bis[(6E)-oct-6-en-1-yl]-3,5,9-trioxo-4,10-dioxatetracyclo[9.4.0.0(2,6).0(8,12)]pentadeca-2(6),12-dien-8-yl]acetate + 3 2-oxoglutarate + 3 O2 = phomoidride A + 3 succinate + 3 CO2 + H2O. Functionally, alpha-ketoglutarate-dependent dioxygenase; part of the gene cluster that mediates the biosynthesis of the antihypercholesterolemic agents phomoidrides which are dimeric anhydrides. Within the pathway, tstK is responsible for the iterative oxidation necessary to convert prephomoidride to phomoidride A. The pathway begins with the highly reducing polyketide synthase tstiA that catalyzes the formation of a C12-fatty acyl-ACP, starting from one acetate and 5 malonate units. The hydrolase tstM is involved in the release of the C12-fatty acyl chain from phiA. The alkylcitrate synthase (ACS) tstJ and the alkylcitrate dehydratase (ACDH) tstI then give rise to decarboxylated monomeric anhydrides by coupling the C12-fatty acyl chain with oxalacetic acid. The cyclase tstC is responsible for the dimerization of the monomeric anhydrides which leads to the production of prephomoidride that contains the characteristic bicyclo[4.3.1]deca-1,6-diene system of phomoidrides. Iterative oxidation catalyzed by the alpha-ketoglutarate-dependent dioxygenase tstK produced then phomoidride A. Finally, the methyltransferase tstE converts phomoidride A to phomoidride B via an acetalization reaction. The phosphatidylethanolamine-binding protein tstB and tstN are not essential for dimerization and their functions have still to be determined. In Talaromyces stipitatus (strain ATCC 10500 / CBS 375.48 / QM 6759 / NRRL 1006) (Penicillium stipitatum), this protein is Alpha-ketoglutarate-dependent dioxygenase tstK.